A 120-amino-acid polypeptide reads, in one-letter code: Large ribosomal subunit protein bL19 (120 aa).

Belongs to the bacterial ribosomal protein bL19 family.

Functionally, this protein is located at the 30S-50S ribosomal subunit interface and may play a role in the structure and function of the aminoacyl-tRNA binding site. The polypeptide is Large ribosomal subunit protein bL19 (Microcystis aeruginosa (strain NIES-843 / IAM M-2473)).